Here is a 692-residue protein sequence, read N- to C-terminus: MSRALLRGAACQGCRHEVLRSFVSVSGIPMPRSSPLSSRSISNSRAFSAVTVLRSDRPPSSNQIDRHLSESQEPPAHSEANTPASSQHVPWYLQEEAPIVKDRPLTEAHLPQIPDDSPEMLSTLLEYTYKDLGLDHLKLFDLRGLEIPAALGANVIMIIGTARSVKHLNVSADRLCRWLRSQYKLSPYADGLLGRNELKIKLRRKAKRARAASAAGAMVDEKDDGITTGWICVNAGMVDKGATTTQLSDVGIEGFGNLDLGTSVVVQIFTEEKRADVDLDGLWEATLAREGRKDIRESTEDLSKTGAGPPRSTSDGFGSIPGQKRGFHTMRRLALSAMNSAEPGLEAGFPGVGASSSALPGDAAEVASQLTPTSLLQILAELPADSARNELGSGPNDRQSTLFLRLFYTNHAARFSAQEKAIFRLKLFSIAVSRQHPAYTKDTLFSTFSDFLRDGYDLPDDLGFDVVSALLTPRTAGVVTEQSETHSSEADMELALLVLDRLSLRGVPILNMRIFNILYQAVCAPKTAPSKPTESRPEEGSPSWSVVQQTESQKQTLSRLSKILAAANIPFDAVDARQLMVTLFQCGDYDGFWRLWRQFPLKGVNRTQEDYVQLFKLHAELGEEVRARECLSTGVPLMNQESPAIVLQGPIVTAIMHCILVADPTLQDRDEESPSFYMPLWTECQEALAREN.

The transit peptide at 1-48 (MSRALLRGAACQGCRHEVLRSFVSVSGIPMPRSSPLSSRSISNSRAFS) directs the protein to the mitochondrion. Disordered regions lie at residues 52 to 86 (VLRS…PASS), 293 to 322 (KDIR…SIPG), and 528 to 548 (APSK…SVVQ). A compositionally biased stretch (basic and acidic residues) spans 293-303 (KDIRESTEDLS).

It belongs to the ATP25 family.

The protein localises to the mitochondrion inner membrane. Its function is as follows. Probable mitochondrial mRNA stabilization factor. The sequence is that of ATPase synthesis protein 25, mitochondrial (atp25) from Penicillium rubens (strain ATCC 28089 / DSM 1075 / NRRL 1951 / Wisconsin 54-1255) (Penicillium chrysogenum).